The chain runs to 331 residues: Cytochrome bo(3) ubiquinol oxidase subunit 2 (331 aa).

The signal sequence occupies residues 1–23 (MTKANPFAALKWLSLAPALLLGG). Residue cysteine 24 is the site of N-palmitoyl cysteine attachment. Cysteine 24 carries S-diacylglycerol cysteine lipidation. The Periplasmic portion of the chain corresponds to 24 to 41 (CDMTLFNPKGQVGMDERT). A helical transmembrane segment spans residues 42 to 62 (LIITATLLMLIVVIPVIVMTL). Over 63–86 (AFAWKYRASNTQAEYKPDWHHSNR) the chain is Cytoplasmic. A helical membrane pass occupies residues 87–107 (IEAVVWLVPCVIIAILGWITW). Residues 108–331 (ESTHKLDPYR…DMHMQPSTQE (224 aa)) are Periplasmic-facing.

It belongs to the cytochrome c oxidase subunit 2 family. As to quaternary structure, heterooctamer of two A chains, two B chains, two C chains and two D chains.

Its subcellular location is the cell inner membrane. In terms of biological role, cytochrome bo(3) ubiquinol terminal oxidase is the component of the aerobic respiratory chain of E.coli that predominates when cells are grown at high aeration. Has proton pump activity across the membrane in addition to electron transfer, pumping 2 protons/electron. The protein is Cytochrome bo(3) ubiquinol oxidase subunit 2 (cyoA) of Pseudomonas aeruginosa (strain ATCC 15692 / DSM 22644 / CIP 104116 / JCM 14847 / LMG 12228 / 1C / PRS 101 / PAO1).